A 120-amino-acid polypeptide reads, in one-letter code: Large ribosomal subunit protein bL21 (120 aa).

The protein belongs to the bacterial ribosomal protein bL21 family. In terms of assembly, part of the 50S ribosomal subunit. Contacts protein L20.

This protein binds to 23S rRNA in the presence of protein L20. This chain is Large ribosomal subunit protein bL21, found in Rhizorhabdus wittichii (strain DSM 6014 / CCUG 31198 / JCM 15750 / NBRC 105917 / EY 4224 / RW1) (Sphingomonas wittichii).